The following is a 339-amino-acid chain: Glyceraldehyde-3-phosphate dehydrogenase (339 aa).

Residues 13–14 (RI), Asp35, and Lys84 each bind NAD(+). Residues 156-158 (SCT), Thr187, 216-217 (TG), and Arg239 contribute to the D-glyceraldehyde 3-phosphate site. The active-site Nucleophile is the Cys157. Asn321 lines the NAD(+) pocket.

Belongs to the glyceraldehyde-3-phosphate dehydrogenase family. Homotetramer.

Its subcellular location is the cytoplasm. It carries out the reaction D-glyceraldehyde 3-phosphate + phosphate + NAD(+) = (2R)-3-phospho-glyceroyl phosphate + NADH + H(+). The protein operates within carbohydrate degradation; glycolysis; pyruvate from D-glyceraldehyde 3-phosphate: step 1/5. The protein is Glyceraldehyde-3-phosphate dehydrogenase (G3PD) of Brugia malayi (Filarial nematode worm).